Here is a 153-residue protein sequence, read N- to C-terminus: NADPH-dependent 7-cyano-7-deazaguanine reductase (153 aa).

Cys-51 acts as the Thioimide intermediate in catalysis. The Proton donor role is filled by Asp-58. Substrate contacts are provided by residues 73-75 (LES) and 92-93 (HE).

It belongs to the GTP cyclohydrolase I family. QueF type 1 subfamily.

The protein localises to the cytoplasm. It catalyses the reaction 7-aminomethyl-7-carbaguanine + 2 NADP(+) = 7-cyano-7-deazaguanine + 2 NADPH + 3 H(+). Its pathway is tRNA modification; tRNA-queuosine biosynthesis. Functionally, catalyzes the NADPH-dependent reduction of 7-cyano-7-deazaguanine (preQ0) to 7-aminomethyl-7-deazaguanine (preQ1). The chain is NADPH-dependent 7-cyano-7-deazaguanine reductase from Bradyrhizobium diazoefficiens (strain JCM 10833 / BCRC 13528 / IAM 13628 / NBRC 14792 / USDA 110).